Here is a 334-residue protein sequence, read N- to C-terminus: Pantothenate synthetase (334 aa).

Position 34–41 (34–41 (MGALHEGH)) interacts with ATP. The active-site Proton donor is the His41. Residue Gln71 coordinates (R)-pantoate. Gln71 contributes to the beta-alanine binding site. 158 to 161 (GQKD) is a binding site for ATP. Gln164 is a binding site for (R)-pantoate. Residues Val187 and 195–198 (LSSR) contribute to the ATP site. The interval 288–334 (PLMLGTRGPAGEASPPNRERSEPGSAEQNKSPGEARTTPSGTSEASE) is disordered. The span at 313–334 (AEQNKSPGEARTTPSGTSEASE) shows a compositional bias: polar residues.

Belongs to the pantothenate synthetase family. In terms of assembly, homodimer.

The protein resides in the cytoplasm. The catalysed reaction is (R)-pantoate + beta-alanine + ATP = (R)-pantothenate + AMP + diphosphate + H(+). It functions in the pathway cofactor biosynthesis; (R)-pantothenate biosynthesis; (R)-pantothenate from (R)-pantoate and beta-alanine: step 1/1. In terms of biological role, catalyzes the condensation of pantoate with beta-alanine in an ATP-dependent reaction via a pantoyl-adenylate intermediate. This Nocardioides sp. (strain ATCC BAA-499 / JS614) protein is Pantothenate synthetase.